The following is a 419-amino-acid chain: Tyrosine--tRNA ligase (419 aa).

Residue Tyr-34 coordinates L-tyrosine. The 'HIGH' region signature appears at Pro-39–His-48. Positions 168 and 172 each coordinate L-tyrosine. Residues Lys-230–Ser-234 carry the 'KMSKS' region motif. Lys-233 contacts ATP. The S4 RNA-binding domain occupies Val-352–Tyr-418.

Belongs to the class-I aminoacyl-tRNA synthetase family. TyrS type 1 subfamily. As to quaternary structure, homodimer.

The protein resides in the cytoplasm. It catalyses the reaction tRNA(Tyr) + L-tyrosine + ATP = L-tyrosyl-tRNA(Tyr) + AMP + diphosphate + H(+). In terms of biological role, catalyzes the attachment of tyrosine to tRNA(Tyr) in a two-step reaction: tyrosine is first activated by ATP to form Tyr-AMP and then transferred to the acceptor end of tRNA(Tyr). The chain is Tyrosine--tRNA ligase from Listeria welshimeri serovar 6b (strain ATCC 35897 / DSM 20650 / CCUG 15529 / CIP 8149 / NCTC 11857 / SLCC 5334 / V8).